A 132-amino-acid polypeptide reads, in one-letter code: Large-conductance mechanosensitive channel (132 aa).

3 helical membrane-spanning segments follow: residues 14–34 (VVDL…VSSL), 38–58 (IITP…LHFG), and 67–87 (GNFI…FMFV).

Belongs to the MscL family. Homopentamer.

The protein localises to the cell membrane. Channel that opens in response to stretch forces in the membrane lipid bilayer. May participate in the regulation of osmotic pressure changes within the cell. This Bacillus cereus (strain B4264) protein is Large-conductance mechanosensitive channel.